The sequence spans 168 residues: PTS system glucose-specific EIIA component (168 aa).

The 105-residue stretch at 38–142 folds into the PTS EIIA type-1 domain; sequence DEVFSNKIVG…STLTPVIISN (105 aa). 2 residues coordinate Zn(2+): H75 and H90. H90 functions as the Tele-phosphohistidine intermediate; for EIIA activity in the catalytic mechanism. A Phosphohistidine; by HPr modification is found at H90.

Zn(2+) is required as a cofactor.

The protein resides in the cytoplasm. Functionally, the phosphoenolpyruvate-dependent sugar phosphotransferase system (sugar PTS), a major carbohydrate active transport system, catalyzes the phosphorylation of incoming sugar substrates concomitantly with their translocation across the cell membrane. The enzyme II complex composed of PtsG and Crr is involved in glucose transport. In Buchnera aphidicola subsp. Baizongia pistaciae (strain Bp), this protein is PTS system glucose-specific EIIA component (crr).